Here is a 30-residue protein sequence, read N- to C-terminus: Scolopendra 20528.11 Da toxin (30 aa).

Belongs to the CRISP family. Venom allergen 5-like subfamily. In terms of processing, contains 3 disulfide bonds. Expressed by the venom gland.

The protein resides in the secreted. The protein is Scolopendra 20528.11 Da toxin of Scolopendra angulata (Barbados giant red centipede).